Reading from the N-terminus, the 255-residue chain is Probable esterase ATEG_07663 (255 aa).

Residues S122, D200, and H227 each act as charge relay system in the active site.

Belongs to the LovG family.

Probable esterase; part of the cluster B that mediates the biosynthesis of azasperpyranones, members of the azaphilone family that exhibit anti-cancer activities. Azasperpyranones are synthesized by 2 clusters, A and B. Cluster A is responsible for the production of the polyhydric phenol moiety while the azaphilonoid scaffold is produced by the cluster B. The non-reducing polyketide synthase ATEG_03629 produces 5-methyl orsellinic acid, which is then reduced to 5-methyl orsellinic aldehyde by the NRPS-like protein ATEG_03630. 5-methyl orsellinic aldehyde is then first hydroxylated by the FAD-dependent monooxygenase ATEG_03635 and subsequently hydroxylated by the cytochrome P450 monooxygenase ATEG_03631 to produce the unstable polyhydric phenol precursor of azasperpyranones. On the other hand, the polyketide synthase ATEG_07659 is responsible for producing the 3,5-dimethyloctadienone moiety from acetyl-CoA, three malonyl-CoA, and two S-adenosyl methionines (SAM). The 3,5-dimethyloctadienone moiety is then loaded onto the SAT domain of ATEG_07661 and extended with four malonyl-CoA and one SAM, which leads to the formation of 2,4-dihydroxy-6-(5,7-dimethyl-2-oxo-trans-3-trans-5-nonadienyl)-3-methylbenzaldehyde (compound 8) after reductive release and aldol condensation. The FAD-dependent monooxygenase ATEG_07662 is the next enzyme in the biosynthesis sequence and hydroxylates the side chain at the benzylic position of compound 8. In Aspergillus nidulans, afoF, the ortholog of the FAD-dependent oxygenase ATEG_07660, is the key enzyme for the biosynthesis of asperfuranone by catalyzing the hydroxylation at C-8 of to prevent the formation of a six-membered ring hemiacetal intermediate and thus facilitating the formation of a five-membered ring to produce asperfuranone. In Aspergillus terreus, ATEG_07660 is probably not functional, which leads to the formation of the six-membered ring hemiacetal intermediate presperpyranone instead of asperfuranone. Finally, ATEG_03636 is involved in the condensation of the polyhydric phenol moiety produced by cluster A and the perasperpyranone precursor produced by cluster B, to yield azasperpyranone A. Further modifications of azasperpyranone A result in the production of derivatives, including azasperpyranone B to F. The protein is Probable esterase ATEG_07663 of Aspergillus terreus (strain NIH 2624 / FGSC A1156).